Consider the following 576-residue polypeptide: Lysine--tRNA ligase, mitochondrial (576 aa).

The transit peptide at 1–30 directs the protein to the mitochondrion; that stretch reads MNVLLKRRSLTFAPRWLWCKCRSSRSRPYS.

Belongs to the class-II aminoacyl-tRNA synthetase family.

The protein resides in the mitochondrion matrix. It catalyses the reaction tRNA(Lys) + L-lysine + ATP = L-lysyl-tRNA(Lys) + AMP + diphosphate. Its function is as follows. Catalyzes the attachment of lysine to tRNA(Lys) in the mitochondrion. The sequence is that of Lysine--tRNA ligase, mitochondrial (MSK1) from Saccharomyces cerevisiae (strain ATCC 204508 / S288c) (Baker's yeast).